The following is a 198-amino-acid chain: Synaptobrevin homolog YKT6 (198 aa).

Residues 8-126 (VLYKGEAKVV…TIHYPALDGH (119 aa)) enclose the Longin domain. Residues 138–198 (PMTKVQAELD…RKQNSCCAIM (61 aa)) form the v-SNARE coiled-coil homology domain. Ser159 is subject to Phosphoserine. A lipid anchor (S-palmitoyl cysteine) is attached at Cys194. Position 195 is a cysteine methyl ester (Cys195). A lipid anchor (S-farnesyl cysteine) is attached at Cys195. Residues 196-198 (AIM) constitute a propeptide, removed in mature form.

The protein belongs to the synaptobrevin family. In terms of assembly, identified in 2 different SNARE complexes; the first one composed of GOSR1, GOSR2 and STX5 and the second one composed of BET1L, GOSR1 and STX5. Post-translationally, palmitoylated; catalyzes its own palmitoylation. Palmitoylation is required for Golgi targeting. Farnesylation is required for Golgi targeting.

Its subcellular location is the cytoplasm. The protein localises to the cytosol. The protein resides in the cytoplasmic vesicle membrane. It localises to the golgi apparatus membrane. Its function is as follows. Vesicular soluble NSF attachment protein receptor (v-SNARE) mediating vesicle docking and fusion to a specific acceptor cellular compartment. Functions in endoplasmic reticulum to Golgi transport; as part of a SNARE complex composed of GOSR1, GOSR2 and STX5. Functions in early/recycling endosome to TGN transport; as part of a SNARE complex composed of BET1L, GOSR1 and STX5. Has a S-palmitoyl transferase activity. In Homo sapiens (Human), this protein is Synaptobrevin homolog YKT6 (YKT6).